Reading from the N-terminus, the 210-residue chain is Tissue inhibitor of metalloproteinase (210 aa).

A signal peptide spans 1–27 (MDLRKHLGLLTLLLVAVFAFYGRPADA). Cys-28 is a binding site for Zn(2+). 2 involved in metalloproteinase-binding regions span residues 28-31 (CSCM) and 93-94 (DA). 5 disulfide bridges follow: Cys-28–Cys-96, Cys-30–Cys-118, Cys-145–Cys-195, Cys-150–Cys-155, and Cys-165–Cys-180. The NTR domain occupies 28–145 (CSCMPSHPQT…SGGYAKATNC (118 aa)).

This sequence belongs to the protease inhibitor I35 (TIMP) family. As to expression, expressed in heads of female and male adult flies. Expressed at the time of eclosion in unopened wings of adult flies. Strongly expressed at the tip of ovarian germarium region 1 where germline stem cells (GSCs) and cystoblasts reside and in region 2 of the germarium.

It is found in the secreted. Its function is as follows. Metalloproteinase inhibitor that acts on both matrix metalloproteinases Mmp1 and Mmp2 in vitro. Complexes with metalloproteinases and irreversibly inactivates them by binding to their catalytic zinc cofactor. Required for wing maturation which is the final step in morphogenesis of the adult fly. Involved in the negative regulation of developmental tissue invasion for imaginal disk eversion during metamorphosis by inhibiting Mmp-mediated basement membrane (BM) degradation. Required for oogenesis and for the long-term maintainance of germarial structure and shape in the adult ovaries. Required for maintaining composition and biophysical properties of the extracellular matrix (ECM), and for the normal organization and cyst production of the germline stem cell (GSC) niche. In Drosophila melanogaster (Fruit fly), this protein is Tissue inhibitor of metalloproteinase.